The following is a 389-amino-acid chain: GTPase Obg (389 aa).

In terms of domain architecture, Obg spans 1–159; that stretch reads MKFVDEAVIR…RSLKLELMLL (159 aa). The tract at residues 122-144 is disordered; sequence FHGLGNTRFKSSTNRAPRQKTLG. Positions 160 to 333 constitute an OBG-type G domain; that stretch reads ADVGLLGMPN…LSLKLIDFIE (174 aa). GTP is bound by residues 166-173, 191-195, 213-216, 283-286, and 314-316; these read GMPNAGKS, FTTLV, DIPG, NKTD, and SAY. Mg(2+)-binding residues include Ser-173 and Thr-193.

It belongs to the TRAFAC class OBG-HflX-like GTPase superfamily. OBG GTPase family. Monomer. The cofactor is Mg(2+).

Its subcellular location is the cytoplasm. An essential GTPase which binds GTP, GDP and possibly (p)ppGpp with moderate affinity, with high nucleotide exchange rates and a fairly low GTP hydrolysis rate. Plays a role in control of the cell cycle, stress response, ribosome biogenesis and in those bacteria that undergo differentiation, in morphogenesis control. In Shewanella woodyi (strain ATCC 51908 / MS32), this protein is GTPase Obg.